We begin with the raw amino-acid sequence, 326 residues long: Vitamin B12 import system permease protein BtuC (326 aa).

Helical transmembrane passes span 15–35 (WLLSLSLLVLLATLLSLCAGE), 61–81 (LAVLLVGAALALSGAVMQALF), 88–108 (PGLLGVSNGAGVGLIAAVLLG), 112–132 (LPGWALGLCAIAGALIITLIL), 146–166 (LLAGVALGIICSALMTWAIYF), 184–204 (GGVDWQQSWLMIALIPVLIWI), 240–260 (GWMVGVSVAMAGAIGFIGLVI), 274–294 (VLLPGCALAGAIALLLADVVA), and 302–322 (ELPIGVVTATLGAPVFIWLLL).

Belongs to the binding-protein-dependent transport system permease family. FecCD subfamily. As to quaternary structure, the complex is composed of two ATP-binding proteins (BtuD), two transmembrane proteins (BtuC) and a solute-binding protein (BtuF).

The protein resides in the cell inner membrane. In terms of biological role, part of the ABC transporter complex BtuCDF involved in vitamin B12 import. Involved in the translocation of the substrate across the membrane. The sequence is that of Vitamin B12 import system permease protein BtuC from Salmonella enteritidis PT4 (strain P125109).